The following is a 618-amino-acid chain: UvrABC system protein C (618 aa).

A GIY-YIG domain is found at 13–92 (DKPGVYLMKN…IKKYRPKYNI (80 aa)). The 36-residue stretch at 204-239 (LDIVENFKLNMEKAAENLEFEKAAMLRDKINIIEKI) folds into the UVR domain.

This sequence belongs to the UvrC family. In terms of assembly, interacts with UvrB in an incision complex.

The protein localises to the cytoplasm. Functionally, the UvrABC repair system catalyzes the recognition and processing of DNA lesions. UvrC both incises the 5' and 3' sides of the lesion. The N-terminal half is responsible for the 3' incision and the C-terminal half is responsible for the 5' incision. The chain is UvrABC system protein C from Clostridium botulinum (strain Okra / Type B1).